We begin with the raw amino-acid sequence, 293 residues long: Capsid protein (293 aa).

Residues 1 to 14 (MSESKAETPSKSAE) are compositionally biased toward basic and acidic residues. The segment at 1–49 (MSESKAETPSKSAEKGVASLSTSAPPSSTTPTAQAKQTPPPVATTARPM) is disordered. Residues 18 to 37 (ASLSTSAPPSSTTPTAQAKQ) show a composition bias toward low complexity.

Belongs to the potexvirus capsid protein family. Interacts with host NbANKr; this interaction targets the capsid protein to the host chloroplast.

It localises to the virion. Its subcellular location is the host chloroplast envelope. Required for genome encapsidation. Forms ribonucleoprotein complexes along with TGB1 helicase and viral RNA. This chain is Capsid protein (ORF5), found in Lolium latent virus (isolate Lolium/USA/US1/-) (LoLV).